A 146-amino-acid chain; its full sequence is Acidic phospholipase A2 2 (146 aa).

An N-terminal signal peptide occupies residues 1–21 (MNPAHLLILAAVCVSSLGASS). Positions 22-27 (NRPMPL) are excised as a propeptide. Cystine bridges form between Cys-38–Cys-98, Cys-53–Cys-145, Cys-55–Cys-71, Cys-70–Cys-126, Cys-77–Cys-119, Cys-87–Cys-112, and Cys-105–Cys-117. Residues Tyr-54, Gly-56, and Gly-58 each contribute to the Ca(2+) site. The active site involves His-74. Ca(2+) is bound at residue Asp-75. Asp-120 is an active-site residue.

Belongs to the phospholipase A2 family. Group I subfamily. D49 sub-subfamily. Ca(2+) is required as a cofactor. In terms of tissue distribution, expressed by the venom gland.

It is found in the secreted. It carries out the reaction a 1,2-diacyl-sn-glycero-3-phosphocholine + H2O = a 1-acyl-sn-glycero-3-phosphocholine + a fatty acid + H(+). PLA2 catalyzes the calcium-dependent hydrolysis of the 2-acyl groups in 3-sn-phosphoglycerides. In Naja kaouthia (Monocled cobra), this protein is Acidic phospholipase A2 2.